Reading from the N-terminus, the 592-residue chain is Aspartate--tRNA ligase (592 aa).

E171 provides a ligand contact to L-aspartate. The interval 195–198 (QLFK) is aspartate. Residue R217 participates in L-aspartate binding. ATP contacts are provided by residues 217 to 219 (RDE) and Q226. Position 448 (H448) interacts with L-aspartate. E482 lines the ATP pocket. Residue R489 participates in L-aspartate binding. 534–537 (GLDR) lines the ATP pocket.

Belongs to the class-II aminoacyl-tRNA synthetase family. Type 1 subfamily. As to quaternary structure, homodimer.

The protein resides in the cytoplasm. It catalyses the reaction tRNA(Asp) + L-aspartate + ATP = L-aspartyl-tRNA(Asp) + AMP + diphosphate. Functionally, catalyzes the attachment of L-aspartate to tRNA(Asp) in a two-step reaction: L-aspartate is first activated by ATP to form Asp-AMP and then transferred to the acceptor end of tRNA(Asp). This Vibrio atlanticus (strain LGP32) (Vibrio splendidus (strain Mel32)) protein is Aspartate--tRNA ligase.